The sequence spans 871 residues: Protein translocase subunit SecA (871 aa).

Residues Gln80, Gly98 to Thr102, and Asp537 contribute to the ATP site.

The protein belongs to the SecA family. Monomer and homodimer. Part of the essential Sec protein translocation apparatus which comprises SecA, SecYEG and auxiliary proteins SecDF. Other proteins may also be involved.

The protein resides in the cell inner membrane. It localises to the cytoplasm. The enzyme catalyses ATP + H2O + cellular proteinSide 1 = ADP + phosphate + cellular proteinSide 2.. Functionally, part of the Sec protein translocase complex. Interacts with the SecYEG preprotein conducting channel. Has a central role in coupling the hydrolysis of ATP to the transfer of proteins into and across the cell membrane, serving as an ATP-driven molecular motor driving the stepwise translocation of polypeptide chains across the membrane. This is Protein translocase subunit SecA from Thermotoga sp. (strain RQ2).